The following is a 355-amino-acid chain: Agamous-like MADS-box protein AGL81 (355 aa).

The disordered stretch occupies residues 1 to 22 (MAIRSLPSSSRCSSSSSSSSYS). The 43-residue stretch at 26-68 (TSLSNRLETIFKKASELCTLCDIEACVIYYGPDGELKTWPPER) folds into the MADS-box domain. A compositionally biased stretch (basic and acidic residues) spans 162-174 (VESQKHKETKPDH). The interval 162–186 (VESQKHKETKPDHQSLASSSLNHQT) is disordered. Residues 176–186 (SLASSSLNHQT) show a composition bias toward polar residues.

As to quaternary structure, interacts with MEE14/CBP1.

The protein localises to the nucleus. Its function is as follows. Probable transcription factor that may function in the maintenance of the proper function of the central cell in pollen tube attraction. This chain is Agamous-like MADS-box protein AGL81, found in Arabidopsis thaliana (Mouse-ear cress).